Reading from the N-terminus, the 593-residue chain is Cryptochrome-2 (593 aa).

The Photolyase/cryptochrome alpha/beta domain maps to Ala22–Leu151. A Glycyl lysine isopeptide (Lys-Gly) (interchain with G-Cter in ubiquitin) cross-link involves residue Lys30. Residue Ser90 is modified to Phosphoserine. Residues Lys126 and Lys242 each participate in a glycyl lysine isopeptide (Lys-Gly) (interchain with G-Cter in ubiquitin) cross-link. A Phosphoserine; by MAPK modification is found at Ser266. Ser271 contributes to the FAD binding site. Residue Ser299 is modified to Phosphoserine. Residue Gln308 coordinates FAD. Lys348 participates in a covalent cross-link: Glycyl lysine isopeptide (Lys-Gly) (interchain with G-Cter in ubiquitin). FAD-binding positions include His374 and Asp406–Asp408. A required for inhibition of CLOCK-BMAL1-mediated transcription region spans residues Trp390–Ile489. Glycyl lysine isopeptide (Lys-Gly) (interchain with G-Cter in ubiquitin) cross-links involve residues Lys475 and Lys504. Residues Pro532–Ala593 are disordered. The span at Ser537–Gly548 shows a compositional bias: low complexity. Phosphoserine; by GSK3-beta is present on Ser554. Phosphoserine; by DYRK1A and MAPK is present on Ser558.

This sequence belongs to the DNA photolyase class-1 family. Component of the circadian core oscillator, which includes the CRY proteins, CLOCK or NPAS2, BMAL1 or BMAL2, CSNK1D and/or CSNK1E, TIMELESS, and the PER proteins. Interacts with TIMELESS. Interacts directly with PER1, PER2 and PER3; interaction with PER2 inhibits its ubiquitination and vice versa. Interacts with CLOCK-BMAL1. Interacts with CLOCK. Interacts with BMAL1. Interacts with NFIL3. Interacts with FBXL3. Interacts with FBXL21. FBXL3, PER2 and the cofactor FAD compete for overlapping binding sites. FBXL3 cannot bind CRY2 that interacts already with PER2 or that contains bound FAD. Interacts with PPP5C (via TPR repeats); the interaction down-regulates the PPP5C phosphatase activity on CSNK1E. Interacts with nuclear receptors AR and NR3C1/GR; the interaction is ligand dependent. Interacts with PRKDC and CIART. Interacts with ISCA1 (in vitro). Interacts with DDB1, USP7 and TARDBP. Interacts with HNF4A. Interacts with PPARA. Interacts with PPARD (via domain NR LBD) and NR1I2 (via domain NR LBD) in a ligand-dependent manner. Interacts with PPARG, NR1I3 and VDR in a ligand-dependent manner. FAD serves as cofactor. It depends on (6R)-5,10-methylene-5,6,7,8-tetrahydrofolate as a cofactor. In terms of processing, phosphorylation on Ser-266 by MAPK is important for the inhibition of CLOCK-BMAL1-mediated transcriptional activity. Phosphorylation by CSKNE requires interaction with PER1 or PER2. Phosphorylated in a circadian manner at Ser-554 and Ser-558 in the suprachiasmatic nucleus (SCN) and liver. Phosphorylation at Ser-558 by DYRK1A promotes subsequent phosphorylation at Ser-554 by GSK3-beta: the two-step phosphorylation at the neighboring Ser residues leads to its proteasomal degradation. Post-translationally, ubiquitinated by the SCF(FBXL3) and SCF(FBXL21) complexes, regulating the balance between degradation and stabilization. The SCF(FBXL3) complex is mainly nuclear and mediates ubiquitination and subsequent degradation of CRY2. In contrast, cytoplasmic SCF(FBXL21) complex-mediated ubiquitination leads to stabilize CRY2 and counteract the activity of the SCF(FBXL3) complex. The SCF(FBXL3) and SCF(FBXL21) complexes probably mediate ubiquitination at different Lys residues. The SCF(FBXL3) complex recognizes and binds CRY2 phosphorylated at Ser-554 and Ser-558. Ubiquitination may be inhibited by PER2. Deubiquitinated by USP7. As to expression, expressed in all tissues examined including fetal brain, fibroblasts, heart, brain, placenta, lung, liver, skeletal muscle, kidney, pancreas, spleen, thymus, prostate, testis, ovary, small intestine, colon and leukocytes. Highest levels in heart and skeletal muscle.

Its subcellular location is the cytoplasm. The protein localises to the nucleus. Its activity is regulated as follows. KL001 (N-[3-(9H-carbazol-9-yl)-2-hydroxypropyl]-N-(2-furanylmethyl)-methanesulfonamide) binds to CRY1 and stabilizes it by inhibiting FBXL3- and ubiquitin-dependent degradation of CRY1 resulting in lengthening of the circadian periods. In terms of biological role, transcriptional repressor which forms a core component of the circadian clock. The circadian clock, an internal time-keeping system, regulates various physiological processes through the generation of approximately 24 hour circadian rhythms in gene expression, which are translated into rhythms in metabolism and behavior. It is derived from the Latin roots 'circa' (about) and 'diem' (day) and acts as an important regulator of a wide array of physiological functions including metabolism, sleep, body temperature, blood pressure, endocrine, immune, cardiovascular, and renal function. Consists of two major components: the central clock, residing in the suprachiasmatic nucleus (SCN) of the brain, and the peripheral clocks that are present in nearly every tissue and organ system. Both the central and peripheral clocks can be reset by environmental cues, also known as Zeitgebers (German for 'timegivers'). The predominant Zeitgeber for the central clock is light, which is sensed by retina and signals directly to the SCN. The central clock entrains the peripheral clocks through neuronal and hormonal signals, body temperature and feeding-related cues, aligning all clocks with the external light/dark cycle. Circadian rhythms allow an organism to achieve temporal homeostasis with its environment at the molecular level by regulating gene expression to create a peak of protein expression once every 24 hours to control when a particular physiological process is most active with respect to the solar day. Transcription and translation of core clock components (CLOCK, NPAS2, BMAL1, BMAL2, PER1, PER2, PER3, CRY1 and CRY2) plays a critical role in rhythm generation, whereas delays imposed by post-translational modifications (PTMs) are important for determining the period (tau) of the rhythms (tau refers to the period of a rhythm and is the length, in time, of one complete cycle). A diurnal rhythm is synchronized with the day/night cycle, while the ultradian and infradian rhythms have a period shorter and longer than 24 hours, respectively. Disruptions in the circadian rhythms contribute to the pathology of cardiovascular diseases, cancer, metabolic syndromes and aging. A transcription/translation feedback loop (TTFL) forms the core of the molecular circadian clock mechanism. Transcription factors, CLOCK or NPAS2 and BMAL1 or BMAL2, form the positive limb of the feedback loop, act in the form of a heterodimer and activate the transcription of core clock genes and clock-controlled genes (involved in key metabolic processes), harboring E-box elements (5'-CACGTG-3') within their promoters. The core clock genes: PER1/2/3 and CRY1/2 which are transcriptional repressors form the negative limb of the feedback loop and interact with the CLOCK|NPAS2-BMAL1|BMAL2 heterodimer inhibiting its activity and thereby negatively regulating their own expression. This heterodimer also activates nuclear receptors NR1D1/2 and RORA/B/G, which form a second feedback loop and which activate and repress BMAL1 transcription, respectively. CRY1 and CRY2 have redundant functions but also differential and selective contributions at least in defining the pace of the SCN circadian clock and its circadian transcriptional outputs. Less potent transcriptional repressor in cerebellum and liver than CRY1, though less effective in lengthening the period of the SCN oscillator. Seems to play a critical role in tuning SCN circadian period by opposing the action of CRY1. With CRY1, dispensable for circadian rhythm generation but necessary for the development of intercellular networks for rhythm synchrony. May mediate circadian regulation of cAMP signaling and gluconeogenesis by blocking glucagon-mediated increases in intracellular cAMP concentrations and in CREB1 phosphorylation. Besides its role in the maintenance of the circadian clock, is also involved in the regulation of other processes. Plays a key role in glucose and lipid metabolism modulation, in part, through the transcriptional regulation of genes involved in these pathways, such as LEP or ACSL4. Represses glucocorticoid receptor NR3C1/GR-induced transcriptional activity by binding to glucocorticoid response elements (GREs). Represses the CLOCK-BMAL1 induced transcription of BHLHE40/DEC1. Represses the CLOCK-BMAL1 induced transcription of NAMPT. Represses PPARD and its target genes in the skeletal muscle and limits exercise capacity. Represses the transcriptional activity of NR1I2. The chain is Cryptochrome-2 (CRY2) from Homo sapiens (Human).